The following is a 160-amino-acid chain: Large ribosomal subunit protein uL22c (160 aa).

Belongs to the universal ribosomal protein uL22 family. In terms of assembly, part of the 50S ribosomal subunit.

Its subcellular location is the plastid. It localises to the chloroplast. Functionally, this protein binds specifically to 23S rRNA. Its function is as follows. The globular domain of the protein is located near the polypeptide exit tunnel on the outside of the subunit, while an extended beta-hairpin is found that lines the wall of the exit tunnel in the center of the 70S ribosome. This is Large ribosomal subunit protein uL22c (rpl22) from Arabis hirsuta (Hairy rock-cress).